Reading from the N-terminus, the 487-residue chain is NADH-quinone oxidoreductase subunit N (487 aa).

Helical transmembrane passes span 16–36 (VIMPEVILSVLGMALLLVNVF), 45–65 (LAWLSLIGIVGAGFAAVTGWG), 79–99 (NFAIFFKIIFLLAAGLAVLIS), 111–131 (GELYPIILFTTVGMMLMAAAT), 133–153 (LMTIFLGLELMSISLYVLAGF), 168–188 (FLLGAFSTGFLLYGMALIYGV), 212–232 (LLIGMFLMLTGFLFKIAAAPF), 257–276 (AAGFAAMLRLLLVAFPAMIA), 281–298 (LLWILAVLTMTVGNFTAL), 306–326 (MLAYSSIAHAGYCLVGFASGT), 333–353 (ILFYMLSYTFMNIGAFAVIVL), 378–398 (ALAMTVFMFSLAGMPPTAGFI), 413–435 (IWLAIIGVLNSAASVYYYLRVIV), and 457–477 (LALVVSAAGSLIPGIIPSMIL).

The protein belongs to the complex I subunit 2 family. In terms of assembly, NDH-1 is composed of 14 different subunits. Subunits NuoA, H, J, K, L, M, N constitute the membrane sector of the complex.

It is found in the cell inner membrane. It catalyses the reaction a quinone + NADH + 5 H(+)(in) = a quinol + NAD(+) + 4 H(+)(out). Its function is as follows. NDH-1 shuttles electrons from NADH, via FMN and iron-sulfur (Fe-S) centers, to quinones in the respiratory chain. The immediate electron acceptor for the enzyme in this species is believed to be ubiquinone. Couples the redox reaction to proton translocation (for every two electrons transferred, four hydrogen ions are translocated across the cytoplasmic membrane), and thus conserves the redox energy in a proton gradient. The sequence is that of NADH-quinone oxidoreductase subunit N from Trichlorobacter lovleyi (strain ATCC BAA-1151 / DSM 17278 / SZ) (Geobacter lovleyi).